We begin with the raw amino-acid sequence, 594 residues long: MRETLEALNSLGFSVGQPEMAPQSEPRDGFSNPQEKMSSRDESTLHSCSGPETPGQKEGIHTEQAEAPCMGSQACIPQKAEPASSVPGEEWMIRKVKVEDEDQEAEEEVEWPQHLSFLPSPFPTPDLGQLAVAYKLEPGTPGTLGGIALSGWAPIPEKPYGCEECERRFRDQLTLRLHQRLHRGEGPCACPDCGRSFTQRAHMLLHQRSHRGERPFPCSECDKRFSKKAHLTRHLRTHTGERPYPCAECGKRFSQKIHLGSHQKTHTGERPFPCTECEKRFRKKTHLIRHQRIHTGERPYQCTQCTRSFTHKQHLVRHQRVHDAASRTRSSPDIPATPHPPTASLAPSPTGPKPFACSHCGQSFGWKKNLATHQSLHLTEGRPFGCDECALGTNVDPAAEPSACTPHAPDCGPGSGPVAPQRTTSSERSFFCPDCGRGFAHGQHLARHRRVHTGERPFACAQCGRRFGSRPNLVAHSRAHSGARPFACAQCGRRFSRKSHLGRHQAVHTGSRPHACAVCARCFSSKTNLVRHQAIHTGSRPFSCPQCAKSFSRKTHLVRHQRIHGEAALPASASNLSAPAWSNPSEVVPPPIFF.

Residues 1–70 (MRETLEALNS…HTEQAEAPCM (70 aa)) are disordered. Residue Lys-97 forms a Glycyl lysine isopeptide (Lys-Gly) (interchain with G-Cter in SUMO2) linkage. 12 C2H2-type zinc fingers span residues 160–182 (YGCE…QRLH), 188–210 (CACP…QRSH), 216–238 (FPCS…LRTH), 244–266 (YPCA…QKTH), 272–294 (FPCT…QRIH), 300–322 (YQCT…QRVH), 355–377 (FACS…QSLH), 430–452 (FFCP…RRVH), 458–480 (FACA…SRAH), 486–508 (FACA…QAVH), 514–536 (HACA…QAIH), and 542–564 (FSCP…QRIH). The segment at 313 to 350 (QHLVRHQRVHDAASRTRSSPDIPATPHPPTASLAPSPT) is disordered. A Glycyl lysine isopeptide (Lys-Gly) (interchain with G-Cter in SUMO2) cross-link involves residue Lys-368.

It belongs to the krueppel C2H2-type zinc-finger protein family. In terms of assembly, interacts with STAT3. Enhances STAT3 activity by keeping it in the nucleus.

Its subcellular location is the nucleus. Its function is as follows. Transcription factor that promotes adipocyte differentiation and suppresses osteoblast differentiation in the bone marrow. Enhances the osteoclast-supporting ability of stromal cells. Binds with STAT3 the consensus sequence 5'-CTTCTGGGAAGA-3' of the acute phase response element (APRE). Transactivates several promoters including FOS, OSM and PPARG. Recruits a histone deacetylase complex. The protein is Zinc finger protein 467 (Znf467) of Rattus norvegicus (Rat).